The chain runs to 1246 residues: Stromal processing peptidase, chloroplastic (1246 aa).

The N-terminal 136 residues, 1–136 (MASFPSPPLA…AKIRRRHVLH (136 aa)), are a transit peptide targeting the chloroplast. His228 is a binding site for Zn(2+). Catalysis depends on Glu231, which acts as the Proton acceptor. His232 serves as a coordination point for Zn(2+). Glu302 is a catalytic residue. Glu309 contacts Zn(2+).

The protein belongs to the peptidase M16 family. It depends on Zn(2+) as a cofactor.

It is found in the plastid. The protein resides in the chloroplast stroma. Functionally, cleaves presequences (transit peptides) from chloroplastic protein precursors. Initially recognizes a precursor by binding to the C-terminus of its transit peptide and then removes the transit peptide in a single endoproteolytic step. In a next step, pursues the cleavage of transit peptide to a subfragment form. This is Stromal processing peptidase, chloroplastic from Oryza sativa subsp. japonica (Rice).